Reading from the N-terminus, the 932-residue chain is Serotype-specific antigen 1 (932 aa).

The first 24 residues, 1–24 (MYKIKHSFNKTLIAISISSFLSIA), serve as a signal peptide directing secretion. In terms of domain architecture, Peptidase S8 spans 25 to 407 (YATESIENPQ…WGLINLKKAV (383 aa)). Active-site charge relay system residues include D58, H116, and S351. The Autotransporter domain maps to 669–932 (HTPLQTTVWA…PIWLESKCWL (264 aa)).

This sequence belongs to the peptidase S8 family.

The protein resides in the cell outer membrane. This is Serotype-specific antigen 1 (ssa1) from Mannheimia haemolytica (Pasteurella haemolytica).